Here is a 129-residue protein sequence, read N- to C-terminus: Small ribosomal subunit protein eS6 (129 aa).

The interval 53–88 (TGGSDTSGRPMRPDVRGVTTKEIMSDGGVGFEPTTD) is disordered.

The protein belongs to the eukaryotic ribosomal protein eS6 family.

The protein is Small ribosomal subunit protein eS6 (rps6e) of Haloarcula marismortui (strain ATCC 43049 / DSM 3752 / JCM 8966 / VKM B-1809) (Halobacterium marismortui).